A 698-amino-acid polypeptide reads, in one-letter code: DNA ligase (698 aa).

NAD(+) is bound by residues 40–44 (DDVYD), 89–90 (SL), and Glu123. Lys125 functions as the N6-AMP-lysine intermediate in the catalytic mechanism. NAD(+) contacts are provided by Arg146, Glu184, Lys300, and Lys324. Residues Cys417, Cys420, Cys435, and Cys441 each coordinate Zn(2+). Positions 618–698 (SSASPVAGKA…EWLALTGAAD (81 aa)) constitute a BRCT domain.

The protein belongs to the NAD-dependent DNA ligase family. LigA subfamily. Mg(2+) is required as a cofactor. It depends on Mn(2+) as a cofactor.

The catalysed reaction is NAD(+) + (deoxyribonucleotide)n-3'-hydroxyl + 5'-phospho-(deoxyribonucleotide)m = (deoxyribonucleotide)n+m + AMP + beta-nicotinamide D-nucleotide.. Functionally, DNA ligase that catalyzes the formation of phosphodiester linkages between 5'-phosphoryl and 3'-hydroxyl groups in double-stranded DNA using NAD as a coenzyme and as the energy source for the reaction. It is essential for DNA replication and repair of damaged DNA. The protein is DNA ligase of Paramagnetospirillum magneticum (strain ATCC 700264 / AMB-1) (Magnetospirillum magneticum).